The following is a 550-amino-acid chain: Keratin, type II cytoskeletal 74 (550 aa).

A head region spans residues 1–140; that stretch reads MSRQLNIKSG…DPEIQKVRAQ (140 aa). Residues 141 to 176 form a coil 1A region; sequence EREQIMALNNKFASFIDKVRFLEQQNQVLGTKWELL. In terms of domain architecture, IF rod spans 141 to 468; the sequence is EREQIMALNN…KLLEGEECWM (328 aa). Positions 177-195 are linker 1; that stretch reads QQMDLNNCRKNLEPILEGY. The tract at residues 196-287 is coil 1B; sequence IGNLRKQLEM…CLYDAEVAQI (92 aa). Residues 288 to 311 are linker 12; sequence QTHTSETSVILSMDNNRYLDLDSI. Positions 312–464 are coil 2; it reads IAEVRAQYED…ATYSKLLEGE (153 aa). A tail region spans residues 465-550; sequence ECWMSGENPS…VSSRARKAAR (86 aa). The disordered stretch occupies residues 491–550; the sequence is HPGSSASTDLGASTMASTGTSSSSSTQSGQTRAKGARVGDPKDSQDKSTPVSSRARKAAR. Positions 502-521 are enriched in low complexity; the sequence is ASTMASTGTSSSSSTQSGQT. Positions 527–536 are enriched in basic and acidic residues; it reads RVGDPKDSQD.

This sequence belongs to the intermediate filament family. In terms of assembly, heterotetramer of two type I and two type II keratins.

Has a role in hair formation. Specific component of keratin intermediate filaments in the inner root sheath (IRS) of the hair follicle. In Bos taurus (Bovine), this protein is Keratin, type II cytoskeletal 74 (KRT74).